The chain runs to 190 residues: Threonylcarbamoyl-AMP synthase (190 aa).

In terms of domain architecture, YrdC-like spans 7 to 190; that stretch reads RDAIAAAIDV…ALTGELFRQG (184 aa).

The protein belongs to the SUA5 family. TsaC subfamily.

The protein resides in the cytoplasm. The enzyme catalyses L-threonine + hydrogencarbonate + ATP = L-threonylcarbamoyladenylate + diphosphate + H2O. In terms of biological role, required for the formation of a threonylcarbamoyl group on adenosine at position 37 (t(6)A37) in tRNAs that read codons beginning with adenine. Catalyzes the conversion of L-threonine, HCO(3)(-)/CO(2) and ATP to give threonylcarbamoyl-AMP (TC-AMP) as the acyladenylate intermediate, with the release of diphosphate. The protein is Threonylcarbamoyl-AMP synthase of Escherichia coli O9:H4 (strain HS).